Reading from the N-terminus, the 303-residue chain is MAVTASMVKELREKTGVGMMDCKKALAETGGDMEAAVDWLRKKGMASAQKKSARVAAEGKVTTLSLGSVGVMLEVNAETDFTAKNDNFCTFADTATKLAADNGCTDIDTLKALDYPGTGRNVGDELTNLIATIGENMNLRRIERMEVSSGLVSSYIHAGGKIGVLVALESTASADALQELGKKLAMHVAAAAPQFLNRDSVDSEAMEREKSVLIDQARASGKPDNIIEKMIVGRMDKYYADVCLLEQAYVIDPDHKVQQVVDAAAKELGCPVKVTGYARFQLGEGIEKKEEDFAAEVAKVVQG.

Residues T79–T82 form an involved in Mg(2+) ion dislocation from EF-Tu region.

It belongs to the EF-Ts family.

Its subcellular location is the cytoplasm. Associates with the EF-Tu.GDP complex and induces the exchange of GDP to GTP. It remains bound to the aminoacyl-tRNA.EF-Tu.GTP complex up to the GTP hydrolysis stage on the ribosome. The chain is Elongation factor Ts from Magnetococcus marinus (strain ATCC BAA-1437 / JCM 17883 / MC-1).